A 328-amino-acid chain; its full sequence is UPF0421 protein SERP1427 (328 aa).

Transmembrane regions (helical) follow at residues 26–46, 61–81, 109–129, and 132–152; these read LFCM…IVTI, LPAT…FGDQ, AVLT…FNFF, and LLTA…ILPP.

This sequence belongs to the UPF0421 family.

It localises to the cell membrane. The polypeptide is UPF0421 protein SERP1427 (Staphylococcus epidermidis (strain ATCC 35984 / DSM 28319 / BCRC 17069 / CCUG 31568 / BM 3577 / RP62A)).